The sequence spans 41 residues: Photosystem I reaction center subunit IX (41 aa).

A helical transmembrane segment spans residues 7–27; it reads YLSTAPVLLTIWLTFTAGFII.

The protein belongs to the PsaJ family.

It is found in the plastid. It localises to the chloroplast thylakoid membrane. Functionally, may help in the organization of the PsaE and PsaF subunits. This chain is Photosystem I reaction center subunit IX, found in Phaeodactylum tricornutum (strain CCAP 1055/1).